Consider the following 434-residue polypeptide: Chaperone SurA (434 aa).

A signal peptide spans 1–22 (MKKWKSSLLGIAIWSLAASSMA). PpiC domains lie at 173–274 (TVQF…KVND) and 283–383 (VTEV…EVLD).

Its subcellular location is the periplasm. The enzyme catalyses [protein]-peptidylproline (omega=180) = [protein]-peptidylproline (omega=0). In terms of biological role, chaperone involved in the correct folding and assembly of outer membrane proteins. Recognizes specific patterns of aromatic residues and the orientation of their side chains, which are found more frequently in integral outer membrane proteins. May act in both early periplasmic and late outer membrane-associated steps of protein maturation. The sequence is that of Chaperone SurA from Photobacterium profundum (strain SS9).